The primary structure comprises 458 residues: MYVPEEIIETVRMIEYQHLDIRTTTLGVNLKDCADKDLDLLKENIYDKITSLGGNLVETAEKVSQKYGIPIVNKRISVTPIGLIIGSTLKGLNEEESVDACVEVGITLDKIAKDVGVDFIGGYSALVHKRATPEEKMLIRSIPKLMTKTDKVCASVNVATTKSGINMYAVKKMGEIIKETSECTKDAIGCAKIVVFCNAPEDNPFMAGAFHGPGEGDAVINAGVSGPGVVRAVVEKLKGKDIGTISEEIKKTAFKITRMGELVGREVANELNVDFGIVDLSLAPTPAPGDSIANILEAMGLERCGTHGTTAALALLNDAVKKGGAMASSYVGGLSGAFIPVSEDAGMIEAVEVGALNLSKLEAMTCVCSVGLDMIAIPGKTPASTVSAIIADEMAIGMINKKTTAVRLIPVPGKDVGEYVEYGGLLGTAPIMEVFEFSSEEFINRGGRIPAPIQSLTN.

This sequence belongs to the UPF0210 family.

The polypeptide is UPF0210 protein Mevan_0738 (Methanococcus vannielii (strain ATCC 35089 / DSM 1224 / JCM 13029 / OCM 148 / SB)).